A 188-amino-acid chain; its full sequence is Elongation factor P (188 aa).

This sequence belongs to the elongation factor P family.

The protein resides in the cytoplasm. The protein operates within protein biosynthesis; polypeptide chain elongation. Its function is as follows. Involved in peptide bond synthesis. Stimulates efficient translation and peptide-bond synthesis on native or reconstituted 70S ribosomes in vitro. Probably functions indirectly by altering the affinity of the ribosome for aminoacyl-tRNA, thus increasing their reactivity as acceptors for peptidyl transferase. This chain is Elongation factor P, found in Wolbachia sp. subsp. Drosophila simulans (strain wRi).